A 95-amino-acid chain; its full sequence is Co-chaperonin GroES (95 aa).

It belongs to the GroES chaperonin family. Heptamer of 7 subunits arranged in a ring. Interacts with the chaperonin GroEL.

Its subcellular location is the cytoplasm. In terms of biological role, together with the chaperonin GroEL, plays an essential role in assisting protein folding. The GroEL-GroES system forms a nano-cage that allows encapsulation of the non-native substrate proteins and provides a physical environment optimized to promote and accelerate protein folding. GroES binds to the apical surface of the GroEL ring, thereby capping the opening of the GroEL channel. In Beijerinckia indica subsp. indica (strain ATCC 9039 / DSM 1715 / NCIMB 8712), this protein is Co-chaperonin GroES.